Reading from the N-terminus, the 1406-residue chain is DNA-directed RNA polymerase subunit beta' (1406 aa).

Zn(2+) is bound by residues C70, C72, C85, and C88. Mg(2+) is bound by residues D460, D462, and D464. C814, C888, C895, and C898 together coordinate Zn(2+).

The protein belongs to the RNA polymerase beta' chain family. The RNAP catalytic core consists of 2 alpha, 1 beta, 1 beta' and 1 omega subunit. When a sigma factor is associated with the core the holoenzyme is formed, which can initiate transcription. Mg(2+) serves as cofactor. Requires Zn(2+) as cofactor.

The enzyme catalyses RNA(n) + a ribonucleoside 5'-triphosphate = RNA(n+1) + diphosphate. Functionally, DNA-dependent RNA polymerase catalyzes the transcription of DNA into RNA using the four ribonucleoside triphosphates as substrates. The polypeptide is DNA-directed RNA polymerase subunit beta' (Sodalis glossinidius (strain morsitans)).